The sequence spans 560 residues: Triacylglyceride transporter MSMEG_3069/MSMEI_2992 (560 aa).

The next 14 membrane-spanning stretches (helical) occupy residues 16–36, 48–68, 78–98, 108–128, 143–163, 168–188, 200–220, 229–249, 269–289, 307–327, 336–356, 368–388, 411–431, and 477–497; these read LAVL…VDIM, QVTP…PLLG, MLIQ…ALSS, IIQG…AADL, AAQE…VWLF, AVFW…HFSL, VDVI…VGLY, VLPS…VAFF, PFLA…VTLV, AFLL…GGWL, VVLI…HWSV, FTLP…GLVI, VVVA…AWGF, and IFLS…LISG. Residues 362 to 371 form a beta-hairpin region; the sequence is RHNLGLFTLP. The tract at residues 519 to 560 is disordered; it reads IDPYDAGDADDAPTEMLDLPTQVLSAPPSDPGDERPGRHRAP.

The protein belongs to the major facilitator superfamily. P55 (TC 2.A.1.3.34) family.

Its subcellular location is the cell inner membrane. With respect to regulation, resistance to ethidium bromide is inhibited by reserpine. In association with lipoprotein LprG transports triacyglycerides (TAG) across the inner cell membrane into the periplasm; TAG probably regulates lipid metabolism and growth regulation and plays a structural role in the outer membrane. TAG (and maybe other lipids) enters the central cavity of the P55 transporter from within the cell inner membrane via clefts on the cytoplasmic face of P55 between TM5-TM8 and TM2-TM11. From there the lipid is probably transferred to the hydrophobic cavity of LprG. Confers resistance to ethidium bromide, possibly acting as an efflux pump, requires LprG lipoprotein for normal function. Export of ethidium bromide can be complemented by the equivalent operon from M.tuberculosis (lprG-Rv1410c). Involved in drug susceptibilty, its expression alone partially complements the antibiotic susceptibilty of a double lprG-mfs deletion. Probably does not function as a bona fide drug efflux pump, but instead plays a role in outer membrane biogenesis. Probably required with LprG for normal surface localization of lipoarabinomannan (LAM). The sequence is that of Triacylglyceride transporter MSMEG_3069/MSMEI_2992 from Mycolicibacterium smegmatis (strain ATCC 700084 / mc(2)155) (Mycobacterium smegmatis).